We begin with the raw amino-acid sequence, 353 residues long: Photosystem II D2 protein (353 aa).

Thr-2 carries the N-acetylthreonine modification. Thr-2 carries the post-translational modification Phosphothreonine. A helical membrane pass occupies residues 41 to 61 (CAYFAVGGWFTGTTFVTSWYT). His-118 provides a ligand contact to chlorophyll a. The helical transmembrane segment at 125-141 (GFMLRQFELARSVQLRP) threads the bilayer. Pheophytin a is bound by residues Gln-130 and Asn-143. A helical transmembrane segment spans residues 153-166 (VFVSVFLIYPLGQS). His-198 provides a ligand contact to chlorophyll a. A helical transmembrane segment spans residues 208-228 (AALLCAIHGATVENTLFEDGD). A plastoquinone is bound by residues His-215 and Phe-262. His-215 is a Fe cation binding site. His-269 provides a ligand contact to Fe cation. The chain crosses the membrane as a helical span at residues 279–295 (GLWMSALGVVGLALNLR).

The protein belongs to the reaction center PufL/M/PsbA/D family. As to quaternary structure, PSII is composed of 1 copy each of membrane proteins PsbA, PsbB, PsbC, PsbD, PsbE, PsbF, PsbH, PsbI, PsbJ, PsbK, PsbL, PsbM, PsbT, PsbX, PsbY, PsbZ, Psb30/Ycf12, at least 3 peripheral proteins of the oxygen-evolving complex and a large number of cofactors. It forms dimeric complexes. The cofactor is The D1/D2 heterodimer binds P680, chlorophylls that are the primary electron donor of PSII, and subsequent electron acceptors. It shares a non-heme iron and each subunit binds pheophytin, quinone, additional chlorophylls, carotenoids and lipids. There is also a Cl(-1) ion associated with D1 and D2, which is required for oxygen evolution. The PSII complex binds additional chlorophylls, carotenoids and specific lipids..

It is found in the plastid. Its subcellular location is the chloroplast thylakoid membrane. It carries out the reaction 2 a plastoquinone + 4 hnu + 2 H2O = 2 a plastoquinol + O2. Its function is as follows. Photosystem II (PSII) is a light-driven water:plastoquinone oxidoreductase that uses light energy to abstract electrons from H(2)O, generating O(2) and a proton gradient subsequently used for ATP formation. It consists of a core antenna complex that captures photons, and an electron transfer chain that converts photonic excitation into a charge separation. The D1/D2 (PsbA/PsbD) reaction center heterodimer binds P680, the primary electron donor of PSII as well as several subsequent electron acceptors. D2 is needed for assembly of a stable PSII complex. The polypeptide is Photosystem II D2 protein (Atropa belladonna (Belladonna)).